Consider the following 86-residue polypeptide: MLGIDVKKTKEELIISWQLAEITIPLRDVIEVTEDATYAGVEETSAIRIGTAYGTTDRILIKTVKQNYVLFTTNKVSILNAINAKN.

It belongs to the UPF0457 family.

The polypeptide is UPF0457 protein BCE33L2265 (Bacillus cereus (strain ZK / E33L)).